The primary structure comprises 142 residues: 3-hydroxyacyl-[acyl-carrier-protein] dehydratase FabZ (142 aa).

Residue H46 is part of the active site.

The protein belongs to the thioester dehydratase family. FabZ subfamily.

Its subcellular location is the cytoplasm. It carries out the reaction a (3R)-hydroxyacyl-[ACP] = a (2E)-enoyl-[ACP] + H2O. In terms of biological role, involved in unsaturated fatty acids biosynthesis. Catalyzes the dehydration of short chain beta-hydroxyacyl-ACPs and long chain saturated and unsaturated beta-hydroxyacyl-ACPs. This chain is 3-hydroxyacyl-[acyl-carrier-protein] dehydratase FabZ, found in Thermus thermophilus (strain ATCC BAA-163 / DSM 7039 / HB27).